The following is a 790-amino-acid chain: Cadherin-6 (790 aa).

The N-terminal stretch at 1–18 (MRTYRYFLLLFWVGQPYP) is a signal peptide. The propeptide occupies 19 to 53 (TLSTPLSKRTSGFPAKKRALELSGNSKNELNRSKR). Asn-49 carries an N-linked (GlcNAc...) asparagine glycan. 5 consecutive Cadherin domains span residues 54–159 (SWMW…EPIF), 160–268 (TKEV…PPRF), 269–383 (PQST…PPVF), 384–486 (SKLA…DNAP), and 487–608 (EFAE…LIHP). At 54 to 615 (SWMWNQFFLL…IHPTGLSTGA (562 aa)) the chain is on the extracellular side. Residue Asn-255 is glycosylated (N-linked (GlcNAc...) asparagine). The interval 259-288 (TDVNDNPPRFPQSTYQFKTPESSPPGTPIG) is disordered. Positions 269–279 (PQSTYQFKTPE) are enriched in polar residues. 4 N-linked (GlcNAc...) asparagine glycosylation sites follow: Asn-399, Asn-437, Asn-455, and Asn-536. A helical membrane pass occupies residues 616–636 (LVAILLCIVILLVTVVLFAAL). The Cytoplasmic segment spans residues 637 to 790 (RRQRKKEPLI…YGGVDSDKDS (154 aa)). 2 positions are modified to phosphoserine: Ser-786 and Ser-790.

In terms of tissue distribution, highly expressed in brain, cerebellum, and kidney. Lung, pancreas, and gastric mucosa show a weak expression. Also expressed in certain liver and kidney carcinomas.

The protein resides in the cell membrane. Its function is as follows. Cadherins are calcium-dependent cell adhesion proteins. They preferentially interact with themselves in a homophilic manner in connecting cells; cadherins may thus contribute to the sorting of heterogeneous cell types. The polypeptide is Cadherin-6 (CDH6) (Homo sapiens (Human)).